Reading from the N-terminus, the 401-residue chain is Transcription factor atf-2 (401 aa).

The segment covering 19–38 (SASAEFSSSSSDSSNFSEGS) has biased composition (low complexity). Residues 19 to 78 (SASAEFSSSSSDSSNFSEGSPPESRRNSVNESVIKDEHYWERRRRNNDASRRSREKRRQN) form a disordered region. Over residues 41-78 (ESRRNSVNESVIKDEHYWERRRRNNDASRRSREKRRQN) the composition is skewed to basic and acidic residues. The region spanning 54 to 100 (DEHYWERRRRNNDASRRSREKRRQNDLAMEEKIMLLSAENERLKSQL) is the bZIP 1 domain. Residues 60-85 (RRRRNNDASRRSREKRRQNDLAMEEK) are basic motif 1. The leucine-zipper 1 stretch occupies residues 89 to 96 (LSAENERL). The span at 181–211 (SASSLFSSSSSSAFHPFRPSESAQQSFPSSS) shows a compositional bias: low complexity. Disordered regions lie at residues 181–256 (SASS…PQPV) and 273–345 (QRRP…AAKR). Composition is skewed to polar residues over residues 222–256 (DSSTDVNMPQPQLQPGSSVIQQIGQPAPSGTPQPV) and 273–283 (QRRPSPTVPQS). A compositionally biased stretch (low complexity) spans 305–317 (ESVSSSASFSPSH). In terms of domain architecture, bZIP 2 spans 329–392 (SPQYVDRRRR…AHFKSVLAQR (64 aa)). The tract at residues 335-360 (RRRRNNEAAKRCRANRRAVFEYRSRR) is basic motif 2. The stretch at 361-388 (VQLLEGENEDLRTQIETLKAEIAHFKSV) forms a coiled coil. Positions 364–378 (LEGENEDLRTQIETL) are leucine-zipper 2.

Belongs to the bZIP family. Interacts with cell death specification protein ces-2. Phosphorylated by mitogen-activated protein kinases pmk-2 and pmk-3. May be responsive to osmotic stress.

The protein localises to the nucleus. Functionally, acts as a transcription factor that recognizes and binds to the sequence 5'-[GA]TTA[CT]GTAA[CT]-3', a sequence present in many promoters. Involved in the development of the excretory duct cell, by positively modulating embryonic transcription of putative transcription factor lin-48, acting in concert with cell death specification protein ces-2. Negatively modulates expression of key autophagy-related genes, bec-1/ATG6 and lgg-1/ATG8, and may link together autophagy and apoptosis during development. Positively modulates expression of neuropeptide pigment dispersing factor homologs pdf-1 and pdf-2. The chain is Transcription factor atf-2 from Caenorhabditis elegans.